The primary structure comprises 347 residues: Putative GDP-L-fucose synthase 2 (347 aa).

The interval 1-20 (MPSQQRSSSGSTAKAGDADG) is disordered. Position 41 to 47 (41 to 47 (GHRGMVG)) interacts with NADP(+). Residue Tyr-168 is the Proton donor/acceptor of the active site. Residues Lys-172, 195–198 (PNNL), and His-211 contribute to the NADP(+) site. Substrate-binding residues include Arg-219, Trp-234, Arg-241, and Glu-301.

Belongs to the NAD(P)-dependent epimerase/dehydratase family. Fucose synthase subfamily. As to quaternary structure, homodimer.

The enzyme catalyses GDP-beta-L-fucose + NADP(+) = GDP-4-dehydro-alpha-D-rhamnose + NADPH + H(+). Its pathway is nucleotide-sugar biosynthesis; GDP-L-fucose biosynthesis via de novo pathway; GDP-L-fucose from GDP-alpha-D-mannose: step 2/2. Its function is as follows. Catalyzes the two-step NADP-dependent conversion of GDP-4-dehydro-6-deoxy-D-mannose to GDP-fucose, involving an epimerase and a reductase reaction. The polypeptide is Putative GDP-L-fucose synthase 2 (Oryza sativa subsp. japonica (Rice)).